A 261-amino-acid polypeptide reads, in one-letter code: uncharacterized protein (261 aa).

Belongs to the BtpA family.

This is an uncharacterized protein from Methanocaldococcus jannaschii (strain ATCC 43067 / DSM 2661 / JAL-1 / JCM 10045 / NBRC 100440) (Methanococcus jannaschii).